The sequence spans 466 residues: UDP-N-acetylglucosamine--dolichyl-phosphate N-acetylglucosaminephosphotransferase (466 aa).

A helical membrane pass occupies residues 12–32 (AAFAVAAHAPVLGLILLGSIV). Asp-57 contributes to the UDP-N-acetyl-alpha-D-glucosamine binding site. Asn-59 carries an N-linked (GlcNAc...) asparagine glycan. Glu-90 contacts UDP-N-acetyl-alpha-D-glucosamine. 2 helical membrane-spanning segments follow: residues 91 to 111 (SLGI…TVCL) and 124 to 144 (PYAS…LGFV). Lys-155 lines the dolichyl phosphate pocket. 2 helical membrane passes run 156–176 (IILT…SLSV) and 236–256 (GAAL…LCIF). 255 to 263 (IFCTNSINI) serves as a coordination point for dolichyl phosphate. Asn-262 is a binding site for Mg(2+). Transmembrane regions (helical) follow at residues 263-283 (ILAG…VASV), 316-336 (DHQL…LALW), 345-365 (VFVG…SSIT), and 374-394 (LFFA…FSIV). Asn-268 provides a ligand contact to UDP-N-acetyl-alpha-D-glucosamine. A Mg(2+)-binding site is contributed by Asp-349. 398 to 400 (RHR) contributes to the UDP-N-acetyl-alpha-D-glucosamine binding site. Asn-416 carries N-linked (GlcNAc...) asparagine glycosylation. Residues 442–462 (CQVIACVLGFVVRYVLSAFLY) traverse the membrane as a helical segment.

This sequence belongs to the glycosyltransferase 4 family. The cofactor is Mg(2+).

The protein resides in the endoplasmic reticulum membrane. It catalyses the reaction a di-trans,poly-cis-dolichyl phosphate + UDP-N-acetyl-alpha-D-glucosamine = an N-acetyl-alpha-D-glucosaminyl-diphospho-di-trans,poly-cis-dolichol + UMP. The protein operates within protein modification; protein glycosylation. Its activity is regulated as follows. Inhibited by natural nucleoside antibiotic tunicamycin, which acts as a structural analog and competitor of UDP-GlcNAc. Functionally, UDP-N-acetylglucosamine--dolichyl-phosphate N-acetylglucosaminephosphotransferase that operates in the biosynthetic pathway of dolichol-linked oligosaccharides, the glycan precursors employed in protein asparagine (N)-glycosylation. The assembly of dolichol-linked oligosaccharides begins on the cytosolic side of the endoplasmic reticulum membrane and finishes in its lumen. The sequential addition of sugars to dolichol pyrophosphate produces dolichol-linked oligosaccharides containing fourteen sugars, including two GlcNAcs, nine mannoses and three glucoses. Once assembled, the oligosaccharide is transferred from the lipid to nascent proteins by oligosaccharyltransferases. Catalyzes the initial step of dolichol-linked oligosaccharide biosynthesis, transfering GlcNAc-1-P from cytosolic UDP-GlcNAc onto the carrier lipid dolichyl phosphate (P-dolichol), yielding GlcNAc-P-P-dolichol embedded in the cytoplasmic leaflet of the endoplasmic reticulum membrane. The polypeptide is UDP-N-acetylglucosamine--dolichyl-phosphate N-acetylglucosaminephosphotransferase (NAGT) (Leishmania amazonensis).